We begin with the raw amino-acid sequence, 266 residues long: Energy-coupling factor transporter transmembrane protein EcfT (266 aa).

5 helical membrane-spanning segments follow: residues 32–52 (IIVVFLANNIWSYAILIAFTV), 71–91 (PLLWLIVFTVVLQLLFSPAGG), 107–127 (LINAGYIFVRFLLIIMMSTLL), 152–172 (VPVDTLAMMLSIALRFVPTLM), and 246–266 (DTVTWLLFLLGFVAILIFRHW).

It belongs to the energy-coupling factor EcfT family. Forms a stable energy-coupling factor (ECF) transporter complex composed of 2 membrane-embedded substrate-binding proteins (S component), 2 ATP-binding proteins (A component) and 2 transmembrane proteins (T component). May be able to interact with more than 1 S component at a time.

It is found in the cell membrane. In terms of biological role, transmembrane (T) component of an energy-coupling factor (ECF) ABC-transporter complex. Unlike classic ABC transporters this ECF transporter provides the energy necessary to transport a number of different substrates. The sequence is that of Energy-coupling factor transporter transmembrane protein EcfT from Levilactobacillus brevis (strain ATCC 367 / BCRC 12310 / CIP 105137 / JCM 1170 / LMG 11437 / NCIMB 947 / NCTC 947) (Lactobacillus brevis).